The following is a 514-amino-acid chain: ATP synthase subunit alpha (514 aa).

Position 170 to 177 (170 to 177) interacts with ATP; the sequence is GDRQIGKT.

This sequence belongs to the ATPase alpha/beta chains family. F-type ATPases have 2 components, CF(1) - the catalytic core - and CF(0) - the membrane proton channel. CF(1) has five subunits: alpha(3), beta(3), gamma(1), delta(1), epsilon(1). CF(0) has three main subunits: a(1), b(2) and c(9-12). The alpha and beta chains form an alternating ring which encloses part of the gamma chain. CF(1) is attached to CF(0) by a central stalk formed by the gamma and epsilon chains, while a peripheral stalk is formed by the delta and b chains.

It localises to the cell inner membrane. It catalyses the reaction ATP + H2O + 4 H(+)(in) = ADP + phosphate + 5 H(+)(out). Functionally, produces ATP from ADP in the presence of a proton gradient across the membrane. The alpha chain is a regulatory subunit. The sequence is that of ATP synthase subunit alpha from Pseudomonas fluorescens (strain ATCC BAA-477 / NRRL B-23932 / Pf-5).